Here is a 258-residue protein sequence, read N- to C-terminus: Probable parvulin-type peptidyl-prolyl cis-trans isomerase (258 aa).

An N-terminal signal peptide occupies residues 1-19 (MKRIAMLAAACVIAVPAFA). The PpiC domain occupies 127 to 219 (KMEYKVRHIL…FGWHVIQVDD (93 aa)).

It belongs to the PpiC/parvulin rotamase family.

The catalysed reaction is [protein]-peptidylproline (omega=180) = [protein]-peptidylproline (omega=0). The polypeptide is Probable parvulin-type peptidyl-prolyl cis-trans isomerase (Bordetella parapertussis (strain 12822 / ATCC BAA-587 / NCTC 13253)).